The chain runs to 378 residues: Protein arginine N-methyltransferase 6 (378 aa).

The interval Met-1 to Arg-46 is disordered. Gly residues predominate over residues Asp-13 to Glu-22. Asymmetric dimethylarginine; by autocatalysis is present on Arg-38. Positions Asp-47–Glu-377 constitute an SAM-dependent MTase PRMT-type domain. Residues His-60, Arg-69, Gly-93, Glu-115, and Glu-144 each coordinate S-adenosyl-L-methionine. Active-site residues include Glu-158 and Glu-167.

This sequence belongs to the class I-like SAM-binding methyltransferase superfamily. Protein arginine N-methyltransferase family. PRMT6 subfamily. In terms of assembly, interacts with (and methylates) HIV-1 Tat, Rev and Nucleocapsid protein p7 (NC). Interacts with EPB41L3 and NCOA1. Post-translationally, automethylation enhances its stability.

Its subcellular location is the nucleus. It catalyses the reaction L-arginyl-[protein] + 2 S-adenosyl-L-methionine = N(omega),N(omega)-dimethyl-L-arginyl-[protein] + 2 S-adenosyl-L-homocysteine + 2 H(+). Arginine methyltransferase that can catalyze the formation of both omega-N monomethylarginine (MMA) and asymmetrical dimethylarginine (aDMA), with a strong preference for the formation of aDMA. Preferentially methylates arginyl residues present in a glycine and arginine-rich domain and displays preference for monomethylated substrates. Specifically mediates the asymmetric dimethylation of histone H3 'Arg-2' to form H3R2me2a. H3R2me2a represents a specific tag for epigenetic transcriptional repression and is mutually exclusive with methylation on histone H3 'Lys-4' (H3K4me2 and H3K4me3). Acts as a transcriptional repressor of various genes such as HOXA2, THBS1 and TP53. Repression of TP53 blocks cellular senescence. Also methylates histone H2A and H4 'Arg-3' (H2AR3me and H4R3me, respectively). Acts as a regulator of DNA base excision during DNA repair by mediating the methylation of DNA polymerase beta (POLB), leading to the stimulation of its polymerase activity by enhancing DNA binding and processivity. Methylates HMGA1. Regulates alternative splicing events. Acts as a transcriptional coactivator of a number of steroid hormone receptors including ESR1, ESR2, PGR and NR3C1. Promotes fasting-induced transcriptional activation of the gluconeogenic program through methylation of the CRTC2 transcription coactivator. Methylates GPS2, protecting GPS2 from ubiquitination and degradation. Methylates SIRT7, inhibiting SIRT7 histone deacetylase activity and promoting mitochondria biogenesis. This chain is Protein arginine N-methyltransferase 6 (Prmt6), found in Mus musculus (Mouse).